Here is a 3149-residue protein sequence, read N- to C-terminus: MSNGDWGQSQRTRGTGPVRGIRTMDVNAPGGGSGGSALRILGTASCNQAHCKFGRFAGIQCVSNCVLYLVKSFLAGRPLTSRPELDEVLDEGARLDALMRQSGILKGHEMAQLTDVPSSVVLRGGGRVHIYRSAEIFGLVLFPAQIANSAVVQSLAEVLHGSYNGVAQFILYICDIYAGAIIIETDGSFYLFDPHCQKDAAPGTPAHVRVSTYAHDILQYVGAPGAQYTCVHLYFLPEAFETEDPRIFMLEHYGVYDFYEANGSGFDLVGPELVSSDGEAAGTPGADSSPPVMLPFERRIIPYNLRPLPSRSFTSDSFPAARYSPAKTNSPPSSPASAAPASAAPASAAPASAAPASAAPASAAPASAAPASAAPASSPPLFIPIPGLGHTPGVPAPSTPPRASSGAAPQTPKRKKGLGKDSPHKKPTSGRRLPLSSTTDTEDDQLPRTHVPPHRPPSAARLPPPVIPIPHQSPPASPTPHPAPVSTIAPSVTPSPRLPLQIPIPLPQAAPSNPKIPLTTPSPSPTAAAAPTTTTLSPPPTQQQPPQSAAPAPSPLLPQQQPTPSAAPAPSPLLPQQQPPPSAARAPSPLPPQQQPLPSATPAPPPAQQLPPSATTLEPEKNHPPAADRAGTEISPSPPFGQQPSFGDDASGGSGLVRYLSDLEEPFLSMSDSEEAESDLASDIPTTEDEDMFEDEVFSNSLESGSSAPTSPITLDTARSQYYQTTFDIETPEMDFVPLESNIARIAGHTYQEQAIVYDPASNREVPEADALSMIDYLLVTVVLEQGLIRSRDRSSVLNLLEFLKDWSGHLQVPTLDLEQLLTSELNIQNLANMLSENKGRAGEFHKHLAAKLEACLPSLATKDAVRVDAGAKMLAEIPQLAESDDGKFDLEAARRRLTDLLSGGDQEAGEGGGEPEDNSIYRGPHVDVPLVLDDESWKRLLSLAEAARTAVARQQAGVDEEDVRFLALLTAIEYGAPPAASVPPFVHNVAVRSKNAALHVRRCTADIRDKVASAASDYLSYLEDPSLPTVMDFDDLLTHLRHTCQIIASLPLLNIRYTSIEWDYRELLYLGTALSDMSGIPWPLERVEEDDPSIAPLPEFETVAKKQKELETTRENEKRLRTILDDIEAMLGLAGVASAPGAPISPASPSATPANHDNPEATPPLADTAALTIPVIEKYIANAGSIVGAAKNPTYIRLRDTIQQIVRSKKYLMNILKSITFYTIDNYIASFEESIDHLYRDLPVLDPEVQDGIDRILDPMVSEALHTFEMGNRLTLEPARLVALQNFATHSTLKETAAAVNLLPGLLAVYDATITGQAPEDALRLLSGLQNQLSQTLIPGKLKKRFLSYLQKLKNNNNDQLRQKEVQAWRLEAEGFKPATEEQLEAFLDTAPNKELKRQYEKKLRQLMETGRKEKEKLREQEDKERQERRAREANEAWARIRKALGARPEPAPTSPDDWNTLLASLLPDNTDSAAAAAAAVARNTDILDSLTQILAAMLLGITRVRRERLRSLLVDDGGAAERMEAAEPGWFTDIETGPLARLDAWPATPAATAKEGGGGRGAEEAAGALFRARTAADAIRSALAQTRQALQSPDMKSAVVNTDLEAPYAEYERGLAGLLEKRRAAEAALTAIVSEYVDRTLPEATNDPGQANLPPPPTIPQATAPPRLASDSALWPKKPQLLTRRERDDLLQATGDFFSELLTEAEAAEVRALEEQVRESQTLMAKAHEMAASTRRGFHTALEAVLSRSRDEAPDDELRSLLPSPPKAPVQAPLEAALARAAAGNGSWPYRKSLAAAKWIRGICEAVRGLSEGALALAGGAGAWLNLAAAADGEIHELTRLLEVEGMAQNSMDGMEELRLALATLDPKRVAGGKETVADWKRRLSRLEAIIQEAQEESQLQGTLQDLVTQARGHTDPRQLKIVVEAARGLALGASAGSQYALLKDKLLRYASAKQSFLAFYETAQPTVFVKHPLTNNLPLLITISAPPTGWGNGAPTRRAQFLAAAGPAKYAGTLWLETESPCDPLNPAYVSADTQEPLNYIPVYHNFLEYVMPTVLENPEAFSLTPAGRPQAIGPPQDDQERRRRTLASVASARLSAAAADSYWDTWPDVESNAGELLREYVSAPKALMEDLADNPIVAMTLLAHASLIASRNHPPYPAPATDREVILLEQREMMALLVGTHPAYAAAFLGAPSFYAGLGLVSALARDGGLGDLLSDSVLTYRLVRSPASGRGGMPSTTRGSNDGEDARRLTRHRIAGPPTGFIFFQDAWEEMDTRAALWPHPEFLGLVHNQSTARARACMLLLARRCFAPEALQQLWHSLRPLEGPVAFQDYLRDFVKQAYTRGEELPRAEGLEVPRETPSSYGTVTGRALRNLMPYGTPITGPKRGSGDTIPVSVFEAAVAAAFLGRPLTLFVSSQYLFNLKTLGQVRVVAPLLYCDGHSEPFRSLVETISLNFLQDLDGYSESFEPEMSIFARQAVWLRELLTEARAAKPKEARPPTVAILANRKNIIWKCFTYRHNLPDVQFYFNAAGASRWPTDVLNPSFYEHEDPPLPVGYQLPPNPRNVQELFSGFPPRVGHGLVSGDGFQSADNTPASSDRLQQLGGGETDQGEKGSTTAESEASGPPSPQSPLLEKVAPGRPRDWLSPTSSPRDVTVTPGLAAPITLPGPRLMARPYFGAETRASESPDRSPGSSPRPWPKDSLELLPQPAPQQPPSSPWASEQGPIVYTLSPHSTPSTASGSQKKHTIQIPGLVPSQKPSYPPSAPYKPGQSTGGIAPTPSAASLTTFGLQPQDTQASSQDPPYGHSIMQREKKQQGGREEAAEIRPSATRLPTAVGLRPRAPVVAAGAAASATPAFDPGEAPSGFPIPQAPALGSGLAAPAHTPVGALAPRPQKTQAQRPQDAAALPTPTIKAVGARPVPKATGALAAGARPRGQPTAAPPSAASPPRVSLPVRSRQQQSPAIPLPPMHSGSEPGARPEVRLSQYRHAGPQTYTVRKEAPPSAASQLPKMPKCKDSMYYPPSGSARYPAPFQALSFSQSVASPAPSSDQTTLLWNTPSVVTQFLSIEDIIREVVTGGSTSGDLVVPSGSPSSLSTAAPEQDLRYSLTLSQASRVLSRFVSQLRRKLERSTHRLIADLERLKFLYL.

Polar residues predominate over residues Met1–Arg13. The disordered stretch occupies residues Met1 to Gly30. Residues Met1–Leu268 are deubiquitination activity. Positions Leu41–Phe258 constitute a Peptidase C76 domain. Catalysis depends on residues Cys61, Asp193, and His195. The tract at residues Pro319 to Ala341 is disordered. 8 tandem repeats follow at residues Pro335–Ala339, Pro340–Ala344, Pro345–Ala349, Pro350–Ala354, Pro355–Ala359, Pro360–Ala364, Pro365–Ala369, and Pro370–Ala374. Residues Pro335–Ala374 form an 8 X 5 AA repeats of P-A-S-A-A region. Disordered stretches follow at residues Phe382–Leu656, Leu901–Arg923, Ala1143–Leu1166, Gly1412–Glu1434, Pro1644–Trp1677, Gly2583–Val2839, Ala2852–Arg2981, and Gln2995–Asp3019. The span at Leu462–Ala483 shows a compositional bias: pro residues. Composition is skewed to low complexity over residues Ala509–Leu536 and Gln544–Pro564. The segment at Ser554–Ala584 is interaction with inner tegument protein. Pro residues predominate over residues Ser565 to Gln609. Residues Ala1143 to Ala1155 are compositionally biased toward low complexity. Polar residues predominate over residues Ser2592–Leu2603. Residues Gln2711 to Ser2720 are compositionally biased toward pro residues. Polar residues-rich tracts occupy residues Ser2734–Ser2745 and Ser2784–Asp2804. A compositionally biased stretch (basic and acidic residues) spans Met2812–Glu2827. Positions Ala2874–Ala2885 are enriched in low complexity.

This sequence belongs to the herpesviridae large tegument protein family. As to quaternary structure, interacts with host CUL1 and CUL4A; these interactions inhibit the E3 ligase activity of cullins. Interacts with inner tegument protein. Interacts with capsid vertex specific component CVC2. Interacts with the major capsid protein/MCP. Interacts with host TRIM25 and YWHAZ.

It is found in the virion tegument. Its subcellular location is the host cytoplasm. The protein resides in the host nucleus. It catalyses the reaction Thiol-dependent hydrolysis of ester, thioester, amide, peptide and isopeptide bonds formed by the C-terminal Gly of ubiquitin (a 76-residue protein attached to proteins as an intracellular targeting signal).. Its function is as follows. Large tegument protein that plays multiple roles in the viral cycle. During viral entry, remains associated with the capsid while most of the tegument is detached and participates in the capsid transport toward the host nucleus. Plays a role in the routing of the capsid at the nuclear pore complex and subsequent uncoating. Within the host nucleus, acts as a deneddylase and promotes the degradation of nuclear CRLs (cullin-RING ubiquitin ligases) and thereby stabilizes nuclear CRL substrates, while cytoplasmic CRLs remain unaffected. These modifications prevent host cell cycle S-phase progression and create a favorable environment allowing efficient viral genome replication. Participates later in the secondary envelopment of capsids. Indeed, plays a linker role for the association of the outer viral tegument to the capsids together with the inner tegument protein. Counteracts host TLR-mediated NF-kappa-B activation through both MYD88 and TICAM1-dependent pathways by interfering with 'Lys-63'- and 'Lys-48'-linked ubiquitination of signaling intermediates such as TRAF6 and IKBKG. Inhibits type I interferon production by forming a tri-molecular complex with host TRIM25 and 14-3-3 thereby promoting TRIM25 autoubiquitination and sequestration of the ligase into inactive protein aggregates. In turn, host RIGI is recruited to the complex but ubiquitination is severely impaired leading to inhibition of the pathway. Also catalyzes the removal of 'Lys-48'- and 'Lys-63'-linked ubiquitin chains on host TBK1 and STING1 suppressing cGAS-STING signaling in addition to the RIGI-MAVS pathway. Inhibits selective autophagy by deubiquitinating host SQSTM1. In turn, decreased SQSTM1 ubiquitination fails to recruit LC3 to SQSTM1-positive aggregates. In the host nucleus, deubiquitinates topoisomerase II subunits TOP2A and TOP2B thereby stabilizing SUMOylated TOP2 which halts the DNA damage response to TOP2-induced double strand DNA breaks and promotes cell survival. The polypeptide is Large tegument protein deneddylase (Epstein-Barr virus (strain B95-8) (HHV-4)).